A 242-amino-acid polypeptide reads, in one-letter code: Probable septum site-determining protein MinC (242 aa).

The protein belongs to the MinC family. As to quaternary structure, interacts with MinD and FtsZ.

Functionally, cell division inhibitor that blocks the formation of polar Z ring septums. Rapidly oscillates between the poles of the cell to destabilize FtsZ filaments that have formed before they mature into polar Z rings. Prevents FtsZ polymerization. This chain is Probable septum site-determining protein MinC, found in Brucella anthropi (strain ATCC 49188 / DSM 6882 / CCUG 24695 / JCM 21032 / LMG 3331 / NBRC 15819 / NCTC 12168 / Alc 37) (Ochrobactrum anthropi).